Here is an 85-residue protein sequence, read N- to C-terminus: Large ribosomal subunit protein bL27 (85 aa).

Residues 1–24 (MAHKKAGGSSRNGRDSNSKRLGVK) form a disordered region.

The protein belongs to the bacterial ribosomal protein bL27 family.

This chain is Large ribosomal subunit protein bL27, found in Nitrosospira multiformis (strain ATCC 25196 / NCIMB 11849 / C 71).